We begin with the raw amino-acid sequence, 54 residues long: uncharacterized protein (54 aa).

A signal peptide spans 1–21 (MNSKQILSLSAFAMTIATAAA). Over 22–29 (GNWNAGDT) the chain is Extracellular. Residues 30-50 (IALLIGIAMFFVLLLALLGWI) form a helical membrane-spanning segment. Topologically, residues 51 to 54 (SRKK) are cytoplasmic.

The protein resides in the membrane. This is an uncharacterized protein from Dictyostelium discoideum (Social amoeba).